Reading from the N-terminus, the 103-residue chain is Small ribosomal subunit protein uS10 (103 aa).

It belongs to the universal ribosomal protein uS10 family. As to quaternary structure, part of the 30S ribosomal subunit.

Involved in the binding of tRNA to the ribosomes. In Xylella fastidiosa (strain M12), this protein is Small ribosomal subunit protein uS10.